Reading from the N-terminus, the 689-residue chain is Glycine--tRNA ligase beta subunit (689 aa).

The protein belongs to the class-II aminoacyl-tRNA synthetase family. In terms of assembly, tetramer of two alpha and two beta subunits.

Its subcellular location is the cytoplasm. It catalyses the reaction tRNA(Gly) + glycine + ATP = glycyl-tRNA(Gly) + AMP + diphosphate. The chain is Glycine--tRNA ligase beta subunit from Shewanella baltica (strain OS195).